The following is a 401-amino-acid chain: S-adenosylmethionine synthase (401 aa).

An ATP-binding site is contributed by 136 to 141; sequence GTGSSD. The disordered stretch occupies residues 278 to 305; that stretch reads GDDGSVGRGNRSNGLITPSRPMSMEATS.

This sequence belongs to the AdoMet synthase 2 family. Mg(2+) is required as a cofactor.

The catalysed reaction is L-methionine + ATP + H2O = S-adenosyl-L-methionine + phosphate + diphosphate. It participates in amino-acid biosynthesis; S-adenosyl-L-methionine biosynthesis; S-adenosyl-L-methionine from L-methionine: step 1/1. Catalyzes the formation of S-adenosylmethionine from methionine and ATP. The sequence is that of S-adenosylmethionine synthase from Methanococcoides burtonii (strain DSM 6242 / NBRC 107633 / OCM 468 / ACE-M).